The chain runs to 506 residues: Deoxyguanosinetriphosphate triphosphohydrolase (506 aa).

Residues 66–274 (RLTHSLEVQQ…MEAADDISYC (209 aa)) enclose the HD domain.

This sequence belongs to the dGTPase family. Type 1 subfamily. Homotetramer. Mg(2+) is required as a cofactor.

The catalysed reaction is dGTP + H2O = 2'-deoxyguanosine + triphosphate + H(+). Functionally, dGTPase preferentially hydrolyzes dGTP over the other canonical NTPs. The protein is Deoxyguanosinetriphosphate triphosphohydrolase of Yersinia pestis bv. Antiqua (strain Antiqua).